The following is a 212-amino-acid chain: uncharacterized protein (212 aa).

Pentapeptide repeat domains lie at 63-102 (VSFRHIELTDVIFEKCDLSNADFSGAVIHRTSVKQSKMVG), 103-142 (MNVAEATLRNVSFEECHGHFSSFSYSNMKQVRFDHCALMQ), and 143-182 (SECSDTVLQQTHFDGCELEGASFTGTSLQNMDISTCRFEQ).

This is an uncharacterized protein from Bacillus subtilis (strain 168).